The primary structure comprises 119 residues: Fluoride-specific ion channel FluC 2 (119 aa).

Residues 46 to 66 (FALGLLTFAGVTGDAALLVGV) traverse the membrane as a helical segment. Na(+) contacts are provided by Gly-70 and Thr-73. Residues 96 to 116 (LNAVGNLACALVGIGLAWGIV) form a helical membrane-spanning segment.

The protein belongs to the fluoride channel Fluc/FEX (TC 1.A.43) family.

It is found in the cell membrane. The enzyme catalyses fluoride(in) = fluoride(out). Its activity is regulated as follows. Na(+) is not transported, but it plays an essential structural role and its presence is essential for fluoride channel function. Its function is as follows. Fluoride-specific ion channel. Important for reducing fluoride concentration in the cell, thus reducing its toxicity. This is Fluoride-specific ion channel FluC 2 from Haloarcula marismortui (strain ATCC 43049 / DSM 3752 / JCM 8966 / VKM B-1809) (Halobacterium marismortui).